Consider the following 481-residue polypeptide: NADH-quinone oxidoreductase subunit N (481 aa).

14 helical membrane-spanning segments follow: residues Ala11–Trp31, Leu38–Met58, Phe69–Val89, Val107–Leu127, Leu128–Tyr148, Phe162–Leu182, Leu203–Ala223, Pro237–Ile257, Trp271–Ile291, Met299–Thr319, Phe327–Val347, Tyr370–Phe390, Val401–Phe421, and Leu457–Met477.

The protein belongs to the complex I subunit 2 family. In terms of assembly, NDH-1 is composed of 14 different subunits. Subunits NuoA, H, J, K, L, M, N constitute the membrane sector of the complex.

The protein localises to the cell inner membrane. The catalysed reaction is a quinone + NADH + 5 H(+)(in) = a quinol + NAD(+) + 4 H(+)(out). Functionally, NDH-1 shuttles electrons from NADH, via FMN and iron-sulfur (Fe-S) centers, to quinones in the respiratory chain. The immediate electron acceptor for the enzyme in this species is believed to be ubiquinone. Couples the redox reaction to proton translocation (for every two electrons transferred, four hydrogen ions are translocated across the cytoplasmic membrane), and thus conserves the redox energy in a proton gradient. The polypeptide is NADH-quinone oxidoreductase subunit N (Acidithiobacillus ferrooxidans (strain ATCC 23270 / DSM 14882 / CIP 104768 / NCIMB 8455) (Ferrobacillus ferrooxidans (strain ATCC 23270))).